A 245-amino-acid polypeptide reads, in one-letter code: 1-(5-phosphoribosyl)-5-[(5-phosphoribosylamino)methylideneamino] imidazole-4-carboxamide isomerase (245 aa).

Asp-11 functions as the Proton acceptor in the catalytic mechanism. Asp-132 functions as the Proton donor in the catalytic mechanism.

Belongs to the HisA/HisF family.

It is found in the cytoplasm. The catalysed reaction is 1-(5-phospho-beta-D-ribosyl)-5-[(5-phospho-beta-D-ribosylamino)methylideneamino]imidazole-4-carboxamide = 5-[(5-phospho-1-deoxy-D-ribulos-1-ylimino)methylamino]-1-(5-phospho-beta-D-ribosyl)imidazole-4-carboxamide. The protein operates within amino-acid biosynthesis; L-histidine biosynthesis; L-histidine from 5-phospho-alpha-D-ribose 1-diphosphate: step 4/9. This Xanthobacter autotrophicus (strain ATCC BAA-1158 / Py2) protein is 1-(5-phosphoribosyl)-5-[(5-phosphoribosylamino)methylideneamino] imidazole-4-carboxamide isomerase.